Reading from the N-terminus, the 448-residue chain is N-succinylarginine dihydrolase (448 aa).

Substrate is bound by residues 20 to 29, asparagine 111, and 138 to 139; these read AGLLFGNEAS and HR. The active site involves glutamate 175. Position 213 (arginine 213) interacts with substrate. Residue histidine 249 is part of the active site. Substrate contacts are provided by aspartate 251 and asparagine 360. Residue cysteine 366 is the Nucleophile of the active site.

Belongs to the succinylarginine dihydrolase family. In terms of assembly, homodimer.

It carries out the reaction N(2)-succinyl-L-arginine + 2 H2O + 2 H(+) = N(2)-succinyl-L-ornithine + 2 NH4(+) + CO2. It functions in the pathway amino-acid degradation; L-arginine degradation via AST pathway; L-glutamate and succinate from L-arginine: step 2/5. In terms of biological role, catalyzes the hydrolysis of N(2)-succinylarginine into N(2)-succinylornithine, ammonia and CO(2). In Shigella dysenteriae serotype 1 (strain Sd197), this protein is N-succinylarginine dihydrolase.